We begin with the raw amino-acid sequence, 376 residues long: uncharacterized protein (376 aa).

The 291-residue stretch at K82–L372 folds into the Peptidase M14 domain. 3 residues coordinate Zn(2+): H138, E141, and H283. E344 serves as the catalytic Proton donor/acceptor.

Belongs to the peptidase M14 family. Requires Zn(2+) as cofactor.

This is an uncharacterized protein from Bacillus subtilis (strain 168).